An 814-amino-acid chain; its full sequence is Transcription activator of gluconeogenesis PADG_03802 (814 aa).

Positions 1-90 (MTSSARNGSP…SAKDPLRPRR (90 aa)) are disordered. Residues 69-83 (STSSTAASANNASAK) show a composition bias toward low complexity. The zn(2)-C6 fungal-type DNA-binding region spans 97-125 (CFACQRAHLTCGDERPCQRCIKRGLQDTC). Disordered regions lie at residues 164 to 208 (NTNS…TNNY), 236 to 287 (SAFQ…PTFF), 323 to 384 (AGDT…SRNI), 442 to 461 (PPTN…STPS), 598 to 617 (TGGS…YNSR), and 695 to 739 (SAAG…ATNV). The segment covering 171-188 (NGTNSNSDNNSTNTNSNN) has biased composition (low complexity). Polar residues-rich tracts occupy residues 189–208 (KPSH…TNNY), 248–279 (FDLS…SQNP), 339–359 (GRSS…NQSP), and 375–384 (GQGQTNSRNI). Positions 442-451 (PPTNTQHQQQ) are enriched in low complexity. The segment covering 720 to 739 (GTTSAVNGVSNGSGNNATNV) has biased composition (low complexity).

The protein belongs to the ERT1/acuK family.

It localises to the nucleus. Functionally, transcription factor which regulates nonfermentable carbon utilization. Activator of gluconeogenetic genes. The sequence is that of Transcription activator of gluconeogenesis PADG_03802 from Paracoccidioides brasiliensis (strain Pb18).